A 551-amino-acid polypeptide reads, in one-letter code: Cleavage and polyadenylation specificity factor subunit 6 (551 aa).

Residues 1 to 213 (MADGVDHIDI…RGRFPGAVPG (213 aa)) are necessary for interaction with NXF1. One can recognise an RRM domain in the interval 81-161 (IALYIGNLTW…QNPVVTPCNK (81 aa)). The tract at residues 81–161 (IALYIGNLTW…QNPVVTPCNK (81 aa)) is necessary for interaction with NUDT21/CPSF5. Positions 81 to 161 (IALYIGNLTW…QNPVVTPCNK (81 aa)) are necessary for nuclear paraspeckles localization. A Phosphothreonine modification is found at Thr157. Residues 169–180 (MQSRKTTQSGQM) show a composition bias toward polar residues. 2 disordered regions span residues 169–411 (MQSR…PLSE) and 477–551 (LHGI…YRHR). The GAR motif lies at 202–206 (RGRGR). Over residues 207–219 (FPGAVPGGDRFPG) the composition is skewed to low complexity. Pro residues-rich tracts occupy residues 220–265 (PAGP…PLAG), 285–366 (GQPP…PPPT), and 377–388 (GPPPTDPYGRPP). Residues 389–404 (PYDRGDYGPPGREMDT) show a composition bias toward basic and acidic residues. A phosphothreonine mark is found at Thr404 and Thr407. Positions 404–551 (TARTPLSEAE…RDREREYRHR (148 aa)) are sufficient for nuclear speckle localization. The segment at 405–551 (ARTPLSEAEF…RDREREYRHR (147 aa)) is necessary for RNA-binding. The tract at residues 481 to 551 (ESKSYGSGSR…RDREREYRHR (71 aa)) is necessary for interaction with SRSF3, SRSF7 and TRA2B/SFRS10. Residues 489-503 (SRRERSRERDHSRSR) are compositionally biased toward basic and acidic residues. The interval 490–551 (RRERSRERDH…RDREREYRHR (62 aa)) is arg/Ser-rich domain. Ser494, Ser500, Ser511, Ser513, and Ser525 each carry phosphoserine. Residues 504–514 (EKSRRHKSRSR) are compositionally biased toward basic residues. The interval 510–551 (KSRSRDRHDDYYRERSRERERHRDRDRDRDRERDREREYRHR) is sufficient for nuclear targeting. Positions 515–551 (DRHDDYYRERSRERERHRDRDRDRDRERDREREYRHR) are enriched in basic and acidic residues.

This sequence belongs to the RRM CPSF6/7 family. Component of the cleavage factor Im (CFIm) complex which is a heterotetramer composed of two subunits of NUDT21/CPSF5 and two subunits of CPSF6 or CPSF7 or a heterodimer of CPSF6 and CPSF7. The cleavage factor Im (CFIm) complex associates with the CPSF and CSTF complexes to promote the assembly of the core mRNA 3'-processing machinery. Associates with the exon junction complex (EJC). Associates with the 80S ribosome particle. Interacts (via the RRM domain) with NUDT21/CPSF5; this interaction is direct and enhances binding to RNA. Interacts (via Arg/Ser-rich domain) with FIP1L1 (preferentially via unphosphorylated form and Arg/Glu/Asp-rich domain); this interaction mediates, at least in part, the interaction between the CFIm and CPSF complexes and may be inhibited by CPSF6 hyper-phosphorylation. Interacts (via N-terminus) with NXF1; this interaction is direct. Interacts with SRSF3. Interacts with SRSF7. Interacts with SNRNP70. Interacts with TRA2B/SFRS10. Interacts with UPF1. Interacts with UPF3B. Interacts with VIRMA. Interacts (via Arg/Ser-rich domain) with TNPO3; promoting nuclear import of CPSF6 independently of its phosphorylation status. Interacts with YTHDC1. Post-translationally, phosphorylated. Phosphorylated in the Arg/Ser-rich domain by SRPK1, in vitro. In terms of processing, symmetrically dimethylated on arginine residues in the GAR motif by PRMT5 in a WDR77- and CLNS1A-dependent manner. Asymmetrically dimethylated on arginine residues in the GAR motif by PRMT1.

The protein resides in the nucleus. The protein localises to the nucleoplasm. It is found in the nucleus speckle. Its subcellular location is the cytoplasm. Its function is as follows. Component of the cleavage factor Im (CFIm) complex that functions as an activator of the pre-mRNA 3'-end cleavage and polyadenylation processing required for the maturation of pre-mRNA into functional mRNAs. CFIm contributes to the recruitment of multiprotein complexes on specific sequences on the pre-mRNA 3'-end, so called cleavage and polyadenylation signals (pA signals). Most pre-mRNAs contain multiple pA signals, resulting in alternative cleavage and polyadenylation (APA) producing mRNAs with variable 3'-end formation. The CFIm complex acts as a key regulator of cleavage and polyadenylation site choice during APA through its binding to 5'-UGUA-3' elements localized in the 3'-untranslated region (UTR) for a huge number of pre-mRNAs. CPSF6 enhances NUDT21/CPSF5 binding to 5'-UGUA-3' elements localized upstream of pA signals and promotes RNA looping, and hence activates directly the mRNA 3'-processing machinery. Plays a role in mRNA export. The chain is Cleavage and polyadenylation specificity factor subunit 6 from Bos taurus (Bovine).